Consider the following 338-residue polypeptide: Probable replication factor C subunit 2 (338 aa).

G60 to T67 is a binding site for ATP.

The protein belongs to the activator 1 small subunits family. Heteropentamer of various rfc subunits that forms a complex (RFC) with PCNA in the presence of ATP.

It localises to the nucleus. The elongation of primed DNA templates by DNA polymerase delta and epsilon requires the action of the accessory proteins PCNA and activator 1. In Dictyostelium discoideum (Social amoeba), this protein is Probable replication factor C subunit 2 (rfc2).